The primary structure comprises 172 residues: Dual-action ribosomal maturation protein DarP (172 aa).

Belongs to the DarP family.

The protein localises to the cytoplasm. Member of a network of 50S ribosomal subunit biogenesis factors which assembles along the 30S-50S interface, preventing incorrect 23S rRNA structures from forming. Promotes peptidyl transferase center (PTC) maturation. The polypeptide is Dual-action ribosomal maturation protein DarP (Azotobacter vinelandii (strain DJ / ATCC BAA-1303)).